Consider the following 272-residue polypeptide: SPbeta prophage-derived aminoglycoside N(3')-acetyltransferase-like protein YokD (272 aa).

CoA is bound by residues leucine 38 to valine 44 and glutamine 113.

This sequence belongs to the antibiotic N-acetyltransferase family. Homodimer.

Its function is as follows. May contribute to antibiotic resistance. In Bacillus subtilis (strain 168), this protein is SPbeta prophage-derived aminoglycoside N(3')-acetyltransferase-like protein YokD (yokD).